Here is a 626-residue protein sequence, read N- to C-terminus: Chaperone protein DnaK (626 aa).

A Phosphothreonine; by autocatalysis modification is found at Thr197. Composition is skewed to basic and acidic residues over residues 512–528 (DAEA…EAVE) and 539–551 (QTEK…GEKI). Disordered regions lie at residues 512–551 (DAEA…GEKI) and 601–626 (DQNA…AEVE).

It belongs to the heat shock protein 70 family.

Its function is as follows. Acts as a chaperone. This is Chaperone protein DnaK from Campylobacter fetus subsp. fetus (strain 82-40).